We begin with the raw amino-acid sequence, 556 residues long: Arginine--tRNA ligase (556 aa).

The short motif at 132 to 142 is the 'HIGH' region element; that stretch reads ANPTGDLHLGH.

It belongs to the class-I aminoacyl-tRNA synthetase family. As to quaternary structure, monomer.

The protein resides in the cytoplasm. The catalysed reaction is tRNA(Arg) + L-arginine + ATP = L-arginyl-tRNA(Arg) + AMP + diphosphate. The chain is Arginine--tRNA ligase from Bacillus velezensis (strain DSM 23117 / BGSC 10A6 / LMG 26770 / FZB42) (Bacillus amyloliquefaciens subsp. plantarum).